The primary structure comprises 538 residues: Protein NRT1/ PTR FAMILY 5.11 (538 aa).

2 helical membrane passes run 44–64 (FAYFGIASNLIMYLTGPLGES) and 74–94 (AWTGTVAFLPLLGGFLADSYL). T99 carries the phosphothreonine modification. A run of 10 helical transmembrane segments spans residues 100-120 (IIISSSLYILGLGLLSFSTMI), 134-154 (TIFFFSLYLVAIGQGGYNPCI), 175-194 (SFFNWLMFGNCISILTTRLV), 204-224 (WSLGFGIPSVSMLLSLFLFLL), 308-328 (IPIWITSVVYTIVHAQSPTFF), 342-362 (GLLVPAATLQSFINLSVVVFI), 389-409 (IGTGIFLSILAMVLAALVETK), 424-444 (VWWLIPQYVIFGVSDMFTMVG), 463-483 (ALNLSIYGAGNYLSSFMISVI), and 507-527 (YFYWLLACLGFIGFAFYLWFA).

Belongs to the major facilitator superfamily. Proton-dependent oligopeptide transporter (POT/PTR) (TC 2.A.17) family. Expressed in shoots and roots.

It is found in the membrane. This chain is Protein NRT1/ PTR FAMILY 5.11 (NPF5.11), found in Arabidopsis thaliana (Mouse-ear cress).